Here is a 480-residue protein sequence, read N- to C-terminus: Probable E3 ubiquitin protein ligase DRIPH (480 aa).

The RING-type zinc-finger motif lies at 16–57 (CPICTNPFKDATTISECLHTFCRSCIRNKFINERVNACPVCN). 4 disordered regions span residues 93 to 133 (GPKT…EPAN), 167 to 193 (RGRKASLPKKIDSKPEPELPPKEPKIK), 241 to 261 (TPPDIVEPEISSDDDTEESVE), and 280 to 356 (VNQN…EMKV). Residues 103–112 (SSKKKRKSRT) show a composition bias toward basic residues. A compositionally biased stretch (low complexity) spans 113 to 133 (SLRVSSSRVSSSPDTPLEPAN). Residues 175 to 193 (KKIDSKPEPELPPKEPKIK) show a composition bias toward basic and acidic residues. Residues 246–260 (VEPEISSDDDTEESV) are compositionally biased toward acidic residues. The segment covering 298 to 309 (GQKLKTNGAATS) has biased composition (polar residues).

The enzyme catalyses S-ubiquitinyl-[E2 ubiquitin-conjugating enzyme]-L-cysteine + [acceptor protein]-L-lysine = [E2 ubiquitin-conjugating enzyme]-L-cysteine + N(6)-ubiquitinyl-[acceptor protein]-L-lysine.. Its pathway is protein modification; protein ubiquitination. In Arabidopsis thaliana (Mouse-ear cress), this protein is Probable E3 ubiquitin protein ligase DRIPH.